A 179-amino-acid chain; its full sequence is Cell division protein SepF (179 aa).

A disordered region spans residues 18–55 (EDSSLPYEKRDEPVFTPVNSSQEPALPMNQPSQSAGTK). Positions 34–55 (PVNSSQEPALPMNQPSQSAGTK) are enriched in polar residues.

Belongs to the SepF family. As to quaternary structure, homodimer. Interacts with FtsZ.

Its subcellular location is the cytoplasm. In terms of biological role, cell division protein that is part of the divisome complex and is recruited early to the Z-ring. Probably stimulates Z-ring formation, perhaps through the cross-linking of FtsZ protofilaments. Its function overlaps with FtsA. The chain is Cell division protein SepF from Streptococcus pneumoniae (strain ATCC 700669 / Spain 23F-1).